Reading from the N-terminus, the 1145-residue chain is Probable ATP-dependent RNA helicase DHX34 (1145 aa).

Basic and acidic residues predominate over residues 1 to 14 (MPPPRTREGRGHRD). Residues 1–27 (MPPPRTREGRGHRDRDHHRAPREEEAP) form a disordered region. The Helicase ATP-binding domain occupies 174–334 (LQTLKEHQVV…FSHAPVVQVP (161 aa)). 187-194 (GDTGCGKS) serves as a coordination point for ATP. Positions 281–284 (DEVH) match the DEAH box motif. A Helicase C-terminal domain is found at 370–538 (AIDNKYPPEE…ALVLQMKSMS (169 aa)). Disordered stretches follow at residues 726-764 (LKRQ…QRAD) and 1091-1114 (NTCP…PQKT). Residues Ser749 and Ser750 each carry the phosphoserine modification.

It belongs to the DEAD box helicase family. DEAH subfamily. Forms a complex with RUVBL1 and RUVBL2. Part of a complex composed of SMG1, DHX34 and UPF1; within the complex DHX34 acts as a scaffolding protein to facilitate SMG1 phosphorylation of UPF1. Interacts with UPF1, MOV10, EIF4A3, XRN2, SMG6, SMG7, SMG9, UPF3A, UPF3B, CASC3/MLN51, XRN1, DIS3 and DCP1A; the interactions are RNA-independent. Interacts with NCBP1/CPB80; the interaction is RNA-dependent. Interacts (via C-terminus) with SMG1; the interaction is RNA-independent.

The enzyme catalyses ATP + H2O = ADP + phosphate + H(+). In terms of biological role, probable ATP-binding RNA helicase. Required for nonsense-mediated decay (NMD) degradation of mRNA transcripts containing premature stop codons. Promotes the phosphorylation of UPF1 along with its interaction with key NMD pathway proteins UPF2 and EIF4A3. Negatively regulates the nucleotide binding ability and ATP hydrolysis of the RUVBL1-RUVBL2 complex via induction of N-terminus conformation changes of the RUVBL2 subunits. The sequence is that of Probable ATP-dependent RNA helicase DHX34 from Mus musculus (Mouse).